The following is a 304-amino-acid chain: Oxygen-dependent coproporphyrinogen-III oxidase (304 aa).

Position 93 (Ser93) interacts with substrate. A divalent metal cation contacts are provided by His97 and His107. His107 acts as the Proton donor in catalysis. Residue 109 to 111 coordinates substrate; it reads NVR. His146 and His176 together coordinate a divalent metal cation. The segment at 241 to 276 is important for dimerization; sequence YVEFNLVYDRGTLFGLQSGGRTESILMSLPPQVRWG. 259–261 contacts substrate; the sequence is GGR.

It belongs to the aerobic coproporphyrinogen-III oxidase family. In terms of assembly, homodimer. A divalent metal cation serves as cofactor.

It is found in the cytoplasm. It carries out the reaction coproporphyrinogen III + O2 + 2 H(+) = protoporphyrinogen IX + 2 CO2 + 2 H2O. Its pathway is porphyrin-containing compound metabolism; protoporphyrin-IX biosynthesis; protoporphyrinogen-IX from coproporphyrinogen-III (O2 route): step 1/1. Functionally, involved in the heme biosynthesis. Catalyzes the aerobic oxidative decarboxylation of propionate groups of rings A and B of coproporphyrinogen-III to yield the vinyl groups in protoporphyrinogen-IX. The chain is Oxygen-dependent coproporphyrinogen-III oxidase from Pseudomonas savastanoi pv. phaseolicola (strain 1448A / Race 6) (Pseudomonas syringae pv. phaseolicola (strain 1448A / Race 6)).